We begin with the raw amino-acid sequence, 231 residues long: Lipoprotein-releasing system ATP-binding protein LolD (231 aa).

The ABC transporter domain occupies 6 to 231 (LKCQSVHKVY…VLAKVAPNSL (226 aa)). Position 42–49 (42–49 (GASGSGKS)) interacts with ATP.

This sequence belongs to the ABC transporter superfamily. Lipoprotein translocase (TC 3.A.1.125) family. As to quaternary structure, the complex is composed of two ATP-binding proteins (LolD) and two transmembrane proteins (LolC and LolE).

Its subcellular location is the cell inner membrane. In terms of biological role, part of the ABC transporter complex LolCDE involved in the translocation of mature outer membrane-directed lipoproteins, from the inner membrane to the periplasmic chaperone, LolA. Responsible for the formation of the LolA-lipoprotein complex in an ATP-dependent manner. The sequence is that of Lipoprotein-releasing system ATP-binding protein LolD from Hahella chejuensis (strain KCTC 2396).